An 869-amino-acid polypeptide reads, in one-letter code: MTDAPAERPDPSVAGDADWAAQARPLLVHADMRLRKRFDQGEPIERLVALRARAVDQLMRNAWTRCIPADSGLSLHAVGGYGRGELFPRSDVDVLVLGDSVAQQRHEQHLSRLFALLWDVGLPISHAVRSPTQCMVAAADQTVLTALIESRALVADAAARAALAAAIAPQRVWPPRDFFQAKREELLARHQRFGDTADNLEPDIKDGPGGLRDLQTLGCMALRAFGVKDVEALVGLGHVGCDEAAALRREREELARLRFGLHIVANRPEERLRFDYQKTLAERLGFADDLESLGVEKMMQRFYRSAALIRRISDRLLQRFEEQFDGEATPESLGGGFSLRRGYLAADSDSWPGDDVLQVFALFVHWAAHREVRGLHSLTARALAEVLREFPAYDVADATARELFMALLRGTRAVETLNRMARLGVLGQWIPAFASVSGRMQFDLFHVYTVDQHTLMVLRNIALFAAGRADERFSIAHEVWPRLRKPELLLLAGLFHDIAKGRGGDHSELGAVDTRAFCLAHRLSEGDTELVTWLVEQHLRMSVTAQKQDISDPEVIHRFATLVGTRERLDYLYLLTCADIAGTSPKLWNAWKDRLLADLYFAARRALREGVEHPPPREERLREARESARALMQAQGHDDATIDRQFAGMPDENFLRFRPEQLAWQAASLIEVEIAQTLVKARRAVPDNDALEVFVYSPDRDGLFAAIVATLDRKGYGIHRARVLDAPHDAIFDVFEVLPRDTYADGDPQRLAATLRQVLAGDLQQVRPARRAVPGQLRHFRFAPRVEFSESADGRRTRISLVAPDRPGLLADVAHVLRVQHLRVHDARIATFGERAEDQFQITDEHDRPLSESARQALRDALCACLDPV.

The uridylyltransferase stretch occupies residues 1-332 (MTDAPAERPD…QFDGEATPES (332 aa)). Positions 333–691 (LGGGFSLRRG…RRAVPDNDAL (359 aa)) are uridylyl-removing. The HD domain occupies 450-572 (VDQHTLMVLR…VGTRERLDYL (123 aa)). ACT domains follow at residues 692–774 (EVFV…RAVP) and 798–869 (RISL…LDPV).

Belongs to the GlnD family. It depends on Mg(2+) as a cofactor.

It carries out the reaction [protein-PII]-L-tyrosine + UTP = [protein-PII]-uridylyl-L-tyrosine + diphosphate. The catalysed reaction is [protein-PII]-uridylyl-L-tyrosine + H2O = [protein-PII]-L-tyrosine + UMP + H(+). With respect to regulation, uridylyltransferase (UTase) activity is inhibited by glutamine, while glutamine activates uridylyl-removing (UR) activity. Its function is as follows. Modifies, by uridylylation and deuridylylation, the PII regulatory proteins (GlnB and homologs), in response to the nitrogen status of the cell that GlnD senses through the glutamine level. Under low glutamine levels, catalyzes the conversion of the PII proteins and UTP to PII-UMP and PPi, while under higher glutamine levels, GlnD hydrolyzes PII-UMP to PII and UMP (deuridylylation). Thus, controls uridylylation state and activity of the PII proteins, and plays an important role in the regulation of nitrogen assimilation and metabolism. The protein is Bifunctional uridylyltransferase/uridylyl-removing enzyme of Xanthomonas oryzae pv. oryzae (strain MAFF 311018).